The following is a 146-amino-acid chain: Hemoglobin subunit beta (146 aa).

N-acetylvaline is present on Val-1. Residues 2 to 146 (HLTGEEKAAV…VANALAHKYH (145 aa)) form the Globin domain. Thr-12 bears the Phosphothreonine mark. Phosphoserine is present on Ser-44. N6-acetyllysine is present on Lys-59. A heme b-binding site is contributed by His-63. Lys-82 bears the N6-acetyllysine mark. A heme b-binding site is contributed by His-92. Cys-93 carries the post-translational modification S-nitrosocysteine. N6-acetyllysine is present on Lys-144.

The protein belongs to the globin family. In terms of assembly, heterotetramer of two alpha chains and two beta chains. As to expression, red blood cells.

In terms of biological role, involved in oxygen transport from the lung to the various peripheral tissues. The chain is Hemoglobin subunit beta (HBB) from Aotus trivirgatus (Three-striped night monkey).